Here is a 611-residue protein sequence, read N- to C-terminus: tRNA uridine 5-carboxymethylaminomethyl modification enzyme MnmG (611 aa).

Residues 12-17 (GGGHAG), Val124, and Ser179 each bind FAD. 271–285 (GPRYCPSVEDKIVRF) serves as a coordination point for NAD(+). Gln368 contacts FAD.

Belongs to the MnmG family. Homodimer. Heterotetramer of two MnmE and two MnmG subunits. Requires FAD as cofactor.

It is found in the cytoplasm. Its function is as follows. NAD-binding protein involved in the addition of a carboxymethylaminomethyl (cmnm) group at the wobble position (U34) of certain tRNAs, forming tRNA-cmnm(5)s(2)U34. This is tRNA uridine 5-carboxymethylaminomethyl modification enzyme MnmG from Mycoplasma mobile (strain ATCC 43663 / 163K / NCTC 11711) (Mesomycoplasma mobile).